The chain runs to 1374 residues: DNA-directed RNA polymerase subunit beta (1374 aa).

Belongs to the RNA polymerase beta chain family. As to quaternary structure, the RNAP catalytic core consists of 2 alpha, 1 beta, 1 beta' and 1 omega subunit. When a sigma factor is associated with the core the holoenzyme is formed, which can initiate transcription.

The catalysed reaction is RNA(n) + a ribonucleoside 5'-triphosphate = RNA(n+1) + diphosphate. DNA-dependent RNA polymerase catalyzes the transcription of DNA into RNA using the four ribonucleoside triphosphates as substrates. The protein is DNA-directed RNA polymerase subunit beta of Paracidovorax citrulli (strain AAC00-1) (Acidovorax citrulli).